A 232-amino-acid polypeptide reads, in one-letter code: Triosephosphate isomerase (232 aa).

6–8 (NFK) serves as a coordination point for substrate. His90 acts as the Electrophile in catalysis. Residue Glu159 is the Proton acceptor of the active site. Residues Gly165 and Ser195 each coordinate substrate.

Belongs to the triosephosphate isomerase family. As to quaternary structure, homodimer.

It is found in the cytoplasm. It catalyses the reaction D-glyceraldehyde 3-phosphate = dihydroxyacetone phosphate. Its pathway is carbohydrate biosynthesis; gluconeogenesis. It participates in carbohydrate degradation; glycolysis; D-glyceraldehyde 3-phosphate from glycerone phosphate: step 1/1. In terms of biological role, involved in the gluconeogenesis. Catalyzes stereospecifically the conversion of dihydroxyacetone phosphate (DHAP) to D-glyceraldehyde-3-phosphate (G3P). This chain is Triosephosphate isomerase, found in Wolinella succinogenes (strain ATCC 29543 / DSM 1740 / CCUG 13145 / JCM 31913 / LMG 7466 / NCTC 11488 / FDC 602W) (Vibrio succinogenes).